A 245-amino-acid polypeptide reads, in one-letter code: 1-(5-phosphoribosyl)-5-[(5-phosphoribosylamino)methylideneamino] imidazole-4-carboxamide isomerase (245 aa).

Aspartate 12 serves as the catalytic Proton acceptor. The Proton donor role is filled by aspartate 131.

The protein belongs to the HisA/HisF family.

The protein resides in the cytoplasm. It catalyses the reaction 1-(5-phospho-beta-D-ribosyl)-5-[(5-phospho-beta-D-ribosylamino)methylideneamino]imidazole-4-carboxamide = 5-[(5-phospho-1-deoxy-D-ribulos-1-ylimino)methylamino]-1-(5-phospho-beta-D-ribosyl)imidazole-4-carboxamide. It participates in amino-acid biosynthesis; L-histidine biosynthesis; L-histidine from 5-phospho-alpha-D-ribose 1-diphosphate: step 4/9. This is 1-(5-phosphoribosyl)-5-[(5-phosphoribosylamino)methylideneamino] imidazole-4-carboxamide isomerase from Thermobifida fusca (strain YX).